Reading from the N-terminus, the 364-residue chain is MKLLIAGGGTGGHLFPGIAVAEEFLARDKQNEVLFVGTWKGIEARVLPKTGYRLECITAAGIRGKGSLARAKGLAKFLYGYAQSRKILKEFRPDLVLGVGGYASAPTLMAARGMQIPRFIHEQNAIPGFTNRMLAKVADKIFISLEESRTYFPEDKTLLTGNPLRRQILEQVALAESRERGDDAFHLLVFGGSAGAHRINLTMGEALPSLKEAKGRLRITHQTGENDLEDVTAAYEEQGFTADVVAFIDSMADAYRWADLIVCRAGATTLAEVTACGKPCIFIPYPHAVDDHQRRNAESLLKRGAGFVIIEQELSGEVLAQAIRDLMDDPARLKAVGEAAQELARLDAAQAIVDEMVASTRKEE.

UDP-N-acetyl-alpha-D-glucosamine-binding positions include 10–12, Asn124, Arg165, Ser193, Ile248, and Gln293; that span reads TGG.

Belongs to the glycosyltransferase 28 family. MurG subfamily.

It is found in the cell inner membrane. It catalyses the reaction di-trans,octa-cis-undecaprenyl diphospho-N-acetyl-alpha-D-muramoyl-L-alanyl-D-glutamyl-meso-2,6-diaminopimeloyl-D-alanyl-D-alanine + UDP-N-acetyl-alpha-D-glucosamine = di-trans,octa-cis-undecaprenyl diphospho-[N-acetyl-alpha-D-glucosaminyl-(1-&gt;4)]-N-acetyl-alpha-D-muramoyl-L-alanyl-D-glutamyl-meso-2,6-diaminopimeloyl-D-alanyl-D-alanine + UDP + H(+). It participates in cell wall biogenesis; peptidoglycan biosynthesis. In terms of biological role, cell wall formation. Catalyzes the transfer of a GlcNAc subunit on undecaprenyl-pyrophosphoryl-MurNAc-pentapeptide (lipid intermediate I) to form undecaprenyl-pyrophosphoryl-MurNAc-(pentapeptide)GlcNAc (lipid intermediate II). The protein is UDP-N-acetylglucosamine--N-acetylmuramyl-(pentapeptide) pyrophosphoryl-undecaprenol N-acetylglucosamine transferase of Geobacter sulfurreducens (strain ATCC 51573 / DSM 12127 / PCA).